A 446-amino-acid polypeptide reads, in one-letter code: MLKHSSAATKENDSPKLKVLDIVSKLEPSLDHSHTHWWKLTSPQLALMLEAADYSIEKQFETLLFHYHWVVPYLGPKPDADGNFKWRSLVSDVGIPLEYSWKWDTATSGPDVRLTIEPINELSGTRVDPLNQAPSLELLHRLAEILPRLDVSWASHFLSTFYDHDKLKYIKESESETGMPLRSTMLVCFEFGRNGITTKTYMSPRKLGQQGFAPLSDYHSAIAALGPSCALDAVTEFLNNSPEGPHLSPFMLAVDNIIPCSSRLKLYFATPRTSYNSIREVLTLGGRLSTVTLESKLRAIHELVKAIMPFPPDLPDDADIPFPEQVLSPTVQDLAESSDMANQRPAFVAGYQYYFDIAPGASLPDIKFYIPIRKAQMNDQAVATGLTNWMRAQGRGAFCNAYTRVLEGLAGGRDLSKCHGLHTHICVMLKGNGEFDVTSYLAPGCK.

Dimethylallyl diphosphate is bound by residues arginine 113, lysine 199, tyrosine 201, arginine 263, lysine 265, tyrosine 267, tyrosine 369, and tyrosine 440.

This sequence belongs to the tryptophan dimethylallyltransferase family.

It participates in secondary metabolite biosynthesis. Its function is as follows. Xanthone prenyltransferase involved in the conversion of monodictyphenone to the prenyl xanthones such as emericellin, shamixanthone and epishamixanthone. Monodictyphenone is first converted to variecoxanthone A via a paeciloxanthone intermediate by the consecutive actions of the FAD-dependent monooxygenase mdpD and the xanthone prenyltransferase xptB. XptB catalyzes regular O-prenylation at the hydroxy group of C-7 of the xanthone ring. Variecoxanthone A is further prenylated to emericellin by xptA before being reduced to shamixanthone and epishamixanthone by the dehydrogenase xptC. The protein is Xanthone prenyltransferase A of Emericella nidulans (strain FGSC A4 / ATCC 38163 / CBS 112.46 / NRRL 194 / M139) (Aspergillus nidulans).